The primary structure comprises 71 residues: MTQLLLFLVALLVLGHVPSGRSEFKRCWKGQGACQTYCTRQETYMHLCPDASLCCLSYALKPPPVPKHEYE.

Positions 1 to 22 (MTQLLLFLVALLVLGHVPSGRS) are cleaved as a signal peptide. Cystine bridges form between Cys27–Cys54, Cys34–Cys48, and Cys38–Cys55.

This sequence belongs to the beta-defensin family.

The protein localises to the secreted. Its function is as follows. Has antibacterial activity. In Homo sapiens (Human), this protein is Beta-defensin 124 (DEFB124).